The following is a 217-amino-acid chain: Small ribosomal subunit protein uS3 (217 aa).

In terms of domain architecture, KH type-2 spans Ile38–Lys106.

It belongs to the universal ribosomal protein uS3 family. As to quaternary structure, part of the 30S ribosomal subunit. Forms a tight complex with proteins S10 and S14.

Its function is as follows. Binds the lower part of the 30S subunit head. Binds mRNA in the 70S ribosome, positioning it for translation. This chain is Small ribosomal subunit protein uS3, found in Streptococcus suis (strain 98HAH33).